A 718-amino-acid chain; its full sequence is Pullulanase (718 aa).

The Nucleophile role is filled by Asp-406. The Proton donor role is filled by Glu-435.

This sequence belongs to the glycosyl hydrolase 13 family.

The catalysed reaction is Hydrolysis of (1-&gt;6)-alpha-D-glucosidic linkages in pullulan, amylopectin and glycogen, and in the alpha- and beta-limit dextrins of amylopectin and glycogen.. The polypeptide is Pullulanase (amyX) (Bacillus subtilis (strain 168)).